A 390-amino-acid polypeptide reads, in one-letter code: Lipoyl synthase, mitochondrial (390 aa).

A mitochondrion-targeting transit peptide spans 1–18 (MALYRAPKLQRSLLNRCL). Residues cysteine 99, cysteine 104, cysteine 110, cysteine 137, cysteine 141, cysteine 144, and serine 351 each contribute to the [4Fe-4S] cluster site. In terms of domain architecture, Radical SAM core spans 120–340 (AEGRSAATAT…KQVAEDLGFL (221 aa)).

Belongs to the radical SAM superfamily. Lipoyl synthase family. [4Fe-4S] cluster is required as a cofactor.

It is found in the mitochondrion. The enzyme catalyses [[Fe-S] cluster scaffold protein carrying a second [4Fe-4S](2+) cluster] + N(6)-octanoyl-L-lysyl-[protein] + 2 oxidized [2Fe-2S]-[ferredoxin] + 2 S-adenosyl-L-methionine + 4 H(+) = [[Fe-S] cluster scaffold protein] + N(6)-[(R)-dihydrolipoyl]-L-lysyl-[protein] + 4 Fe(3+) + 2 hydrogen sulfide + 2 5'-deoxyadenosine + 2 L-methionine + 2 reduced [2Fe-2S]-[ferredoxin]. The protein operates within protein modification; protein lipoylation via endogenous pathway; protein N(6)-(lipoyl)lysine from octanoyl-[acyl-carrier-protein]: step 2/2. Catalyzes the radical-mediated insertion of two sulfur atoms into the C-6 and C-8 positions of the octanoyl moiety bound to the lipoyl domains of lipoate-dependent enzymes, thereby converting the octanoylated domains into lipoylated derivatives. The polypeptide is Lipoyl synthase, mitochondrial (Coprinopsis cinerea (strain Okayama-7 / 130 / ATCC MYA-4618 / FGSC 9003) (Inky cap fungus)).